The sequence spans 157 residues: S-ribosylhomocysteine lyase 2 (157 aa).

Residues His-54, His-58, and Cys-124 each contribute to the Fe cation site.

It belongs to the LuxS family. In terms of assembly, homodimer. Requires Fe cation as cofactor.

The catalysed reaction is S-(5-deoxy-D-ribos-5-yl)-L-homocysteine = (S)-4,5-dihydroxypentane-2,3-dione + L-homocysteine. Its function is as follows. Involved in the synthesis of autoinducer 2 (AI-2) which is secreted by bacteria and is used to communicate both the cell density and the metabolic potential of the environment. The regulation of gene expression in response to changes in cell density is called quorum sensing. Catalyzes the transformation of S-ribosylhomocysteine (RHC) to homocysteine (HC) and 4,5-dihydroxy-2,3-pentadione (DPD). The chain is S-ribosylhomocysteine lyase 2 from Lactobacillus delbrueckii subsp. bulgaricus (strain ATCC BAA-365 / Lb-18).